The chain runs to 197 residues: Adrenodoxin-like protein 2, mitochondrial (197 aa).

A mitochondrion-targeting transit peptide spans Met-1–Gly-74. A 2Fe-2S ferredoxin-type domain is found at Ile-81–Thr-184. [2Fe-2S] cluster is bound by residues Cys-118, Cys-124, Cys-127, and Cys-165.

The protein belongs to the adrenodoxin/putidaredoxin family. [2Fe-2S] cluster serves as cofactor.

Its subcellular location is the mitochondrion. Its function is as follows. Associates with the adrenodoxin reductase MFDR to form an efficient low potential electron transfer chain that is able to reduce cytochrome C. The chain is Adrenodoxin-like protein 2, mitochondrial from Arabidopsis thaliana (Mouse-ear cress).